Here is a 507-residue protein sequence, read N- to C-terminus: Phosphoprotein (507 aa).

Over residues 31–51 the composition is skewed to polar residues; the sequence is EVSSLRDQTCNPGQENGTTGM. 3 disordered regions span residues 31–86, 123–172, and 242–307; these read EVSS…CGER, IEDA…GYSF, and GIVA…DSEY. Acidic residues predominate over residues 147-160; it reads SLDDSTEDSGEDYS. Ser151 is subject to Phosphoserine. Composition is skewed to polar residues over residues 246-271 and 289-300; these read GSTS…SAGN and SGTQLPPRTSNE. A multimerization region spans residues 304–376; the sequence is DSEYDDELFS…LSSIMIAIPG (73 aa). The stretch at 310 to 339 forms a coiled coil; that stretch reads ELFSEIQEIRSAITKLTEDNQAILTKLDTL. Positions 459–507 are interaction with the nucleocapsid (N-RNA); it reads PSKAVLASLIRSSRVDQSHKHNMLALLKNIKGDDNLNEFYQMVKSITHA.

Belongs to the morbillivirus P protein family. In terms of assembly, homotetramer. Interacts (via multimerization domain) with polymerase L; this interaction forms the polymerase L-P complex. Interacts (via N-terminus) with N0 (via Ncore); this interaction allows P to chaperon N0 to avoid N polymerization before encapsidation. Interacts (via C-terminus) with N-RNA template; this interaction positions the polymerase on the template for both transcription and replication. Post-translationally, phosphorylation on serines by host CK2 is necessary for the formation of viral factories.

Functionally, essential cofactor of the RNA polymerase L that plays a central role in the transcription and replication by forming the polymerase complex with RNA polymerase L and recruiting L to the genomic N-RNA template for RNA synthesis. Also plays a central role in the encapsidation of nascent RNA chains by forming the encapsidation complex with the nucleocapsid protein N (N-P complex). Acts as a chaperone for newly synthesized free N protein, so-called N0, allowing encapsidation of nascent RNA chains during replication. The nucleoprotein protein N prevents excessive phosphorylation of P, which leads to down-regulation of viral transcription/ replication. Participates, together with N, in the formation of viral factories (viroplasms), which are large inclusions in the host cytoplasm where replication takes place. This is Phosphoprotein (P/V) from Canine distemper virus (strain Onderstepoort) (CDV).